The following is a 168-amino-acid chain: UPF0178 protein RBAM_023530 (168 aa).

Belongs to the UPF0178 family.

In Bacillus velezensis (strain DSM 23117 / BGSC 10A6 / LMG 26770 / FZB42) (Bacillus amyloliquefaciens subsp. plantarum), this protein is UPF0178 protein RBAM_023530.